The sequence spans 232 residues: Vesicle transport through interaction with t-SNAREs homolog 1B (232 aa).

An N-acetylalanine modification is found at A2. Interaction with CLINT1 regions lie at residues 2–23 and 69–73; these read ATSA…GLHE and APLSF. Over 2-208 the chain is Cytoplasmic; the sequence is ATSAASSEHF…SRKVTTNKLL (207 aa). Positions 35 to 98 form a coiled coil; sequence MAGTEEKKKL…AKLHREVRST (64 aa). T103 is modified (phosphothreonine). The residue at position 107 (R107) is an Omega-N-methylarginine. S138 carries the phosphoserine modification. A coiled-coil region spans residues 161-198; the sequence is SEIIEELGEQRDQLERTKSRLVNTSENLSKSRKILRSM. The chain crosses the membrane as a helical; Anchor for type IV membrane protein span at residues 209–229; that stretch reads LSIVILLELAILGGLVYYKFL. Topologically, residues 230 to 232 are vesicular; sequence RRH.

It belongs to the VTI1 family. In terms of assembly, forms a SNARE complex with STX7, STX8 and VAMP8 which functions in the homotypic fusion of late endosomes. Component of the SNARE complex composed of STX7, STX8, VAMP7 and VIT1B that is required for heterotypic fusion of late endosomes with lysosomes. May interact with STX17. Interacts with CLINT1.

The protein localises to the early endosome membrane. It is found in the late endosome membrane. It localises to the lysosome membrane. Its subcellular location is the cytoplasmic granule. The protein resides in the recycling endosome membrane. V-SNARE that mediates vesicle transport pathways through interactions with t-SNAREs on the target membrane. These interactions are proposed to mediate aspects of the specificity of vesicle trafficking and to promote fusion of the lipid bilayers. May be concerned with increased secretion of cytokines associated with cellular senescence. This Bos taurus (Bovine) protein is Vesicle transport through interaction with t-SNAREs homolog 1B (VTI1B).